A 710-amino-acid chain; its full sequence is NAD(P)H-quinone oxidoreductase subunit 5, chloroplastic (710 aa).

The next 17 membrane-spanning stretches (helical) occupy residues 9–29 (WIIPFVPLLVPMLIGAGLLIF), 40–60 (WSFQSVLLLSIVMAFSIYLSI), 89–109 (IDPLTSIMSILVTTVGILVLI), 125–145 (FTYMSFFCAAMLGLVTSSNFI), 147–167 (IYIFWELVGLCSYLLIGFWFT), 185–205 (GDFGLLLGILGFYWITGSFEF), 221–241 (VNLLFVTLCAALLFVGAIAKS), 258–278 (TPISALIHAATLVAAGIFLVA), 280–300 (LLPLFLVIPYIMYFISLIGII), 327–347 (LGYMMVALGMGSYRSALFHLI), 354–374 (ALLFLAAGSVIHSMETIIGYS), 396–416 (GAFLLGTLSLCGIPPLACFWS), 425–445 (WLYSPIFALIAWGTVGLTAFY), 519–539 (MLFPQILLCFVTFVIGFLGIP), 571–591 (FLKHTVISGGIAYCGIFIAFL), 657–676 (SFDLRIIDQIFNCFAFLSFI), and 689–709 (IPFYLFFYFFFVSIFIFLFYK).

The protein belongs to the complex I subunit 5 family. NDH is composed of at least 16 different subunits, 5 of which are encoded in the nucleus.

The protein resides in the plastid. It localises to the chloroplast thylakoid membrane. It carries out the reaction a plastoquinone + NADH + (n+1) H(+)(in) = a plastoquinol + NAD(+) + n H(+)(out). The enzyme catalyses a plastoquinone + NADPH + (n+1) H(+)(in) = a plastoquinol + NADP(+) + n H(+)(out). Functionally, NDH shuttles electrons from NAD(P)H:plastoquinone, via FMN and iron-sulfur (Fe-S) centers, to quinones in the photosynthetic chain and possibly in a chloroplast respiratory chain. The immediate electron acceptor for the enzyme in this species is believed to be plastoquinone. Couples the redox reaction to proton translocation, and thus conserves the redox energy in a proton gradient. The chain is NAD(P)H-quinone oxidoreductase subunit 5, chloroplastic (ndhF) from Ipomoea purpurea (Common morning glory).